The sequence spans 227 residues: Cytochrome c oxidase subunit 2 (227 aa).

Topologically, residues 1–14 (MAHATQVGLQDATS) are mitochondrial intermembrane. A helical membrane pass occupies residues 15–45 (PIMEELISFHDHALMIIFLISFLVLYALFLT). Residues 46 to 59 (LTTKLTNTNITDAQ) are Mitochondrial matrix-facing. Residues 60–87 (EMETVWTILPAIILVLIALPSLRILYLT) traverse the membrane as a helical segment. At 88-227 (DEINDPSFTI…IFEMGPVFTL (140 aa)) the chain is on the mitochondrial intermembrane side. Histidine 161, cysteine 196, glutamate 198, cysteine 200, histidine 204, and methionine 207 together coordinate Cu cation. Position 198 (glutamate 198) interacts with Mg(2+).

This sequence belongs to the cytochrome c oxidase subunit 2 family. As to quaternary structure, component of the cytochrome c oxidase (complex IV, CIV), a multisubunit enzyme composed of 14 subunits. The complex is composed of a catalytic core of 3 subunits MT-CO1, MT-CO2 and MT-CO3, encoded in the mitochondrial DNA, and 11 supernumerary subunits COX4I, COX5A, COX5B, COX6A, COX6B, COX6C, COX7A, COX7B, COX7C, COX8 and NDUFA4, which are encoded in the nuclear genome. The complex exists as a monomer or a dimer and forms supercomplexes (SCs) in the inner mitochondrial membrane with NADH-ubiquinone oxidoreductase (complex I, CI) and ubiquinol-cytochrome c oxidoreductase (cytochrome b-c1 complex, complex III, CIII), resulting in different assemblies (supercomplex SCI(1)III(2)IV(1) and megacomplex MCI(2)III(2)IV(2)). Found in a complex with TMEM177, COA6, COX18, COX20, SCO1 and SCO2. Interacts with TMEM177 in a COX20-dependent manner. Interacts with COX20. Interacts with COX16. The cofactor is Cu cation.

It is found in the mitochondrion inner membrane. The catalysed reaction is 4 Fe(II)-[cytochrome c] + O2 + 8 H(+)(in) = 4 Fe(III)-[cytochrome c] + 2 H2O + 4 H(+)(out). In terms of biological role, component of the cytochrome c oxidase, the last enzyme in the mitochondrial electron transport chain which drives oxidative phosphorylation. The respiratory chain contains 3 multisubunit complexes succinate dehydrogenase (complex II, CII), ubiquinol-cytochrome c oxidoreductase (cytochrome b-c1 complex, complex III, CIII) and cytochrome c oxidase (complex IV, CIV), that cooperate to transfer electrons derived from NADH and succinate to molecular oxygen, creating an electrochemical gradient over the inner membrane that drives transmembrane transport and the ATP synthase. Cytochrome c oxidase is the component of the respiratory chain that catalyzes the reduction of oxygen to water. Electrons originating from reduced cytochrome c in the intermembrane space (IMS) are transferred via the dinuclear copper A center (CU(A)) of subunit 2 and heme A of subunit 1 to the active site in subunit 1, a binuclear center (BNC) formed by heme A3 and copper B (CU(B)). The BNC reduces molecular oxygen to 2 water molecules using 4 electrons from cytochrome c in the IMS and 4 protons from the mitochondrial matrix. This is Cytochrome c oxidase subunit 2 (MT-CO2) from Hylobates lar (Lar gibbon).